The sequence spans 266 residues: 4-hydroxy-tetrahydrodipicolinate reductase (266 aa).

Residues 8–13 (GAAGRM) and E33 contribute to the NAD(+) site. R34 is an NADP(+) binding site. NAD(+) is bound by residues 97–99 (GST) and 121–124 (APNM). H154 (proton donor/acceptor) is an active-site residue. Residue H155 participates in (S)-2,3,4,5-tetrahydrodipicolinate binding. K158 serves as the catalytic Proton donor. 164-165 (GT) is a binding site for (S)-2,3,4,5-tetrahydrodipicolinate.

The protein belongs to the DapB family.

It localises to the cytoplasm. It carries out the reaction (S)-2,3,4,5-tetrahydrodipicolinate + NAD(+) + H2O = (2S,4S)-4-hydroxy-2,3,4,5-tetrahydrodipicolinate + NADH + H(+). It catalyses the reaction (S)-2,3,4,5-tetrahydrodipicolinate + NADP(+) + H2O = (2S,4S)-4-hydroxy-2,3,4,5-tetrahydrodipicolinate + NADPH + H(+). It functions in the pathway amino-acid biosynthesis; L-lysine biosynthesis via DAP pathway; (S)-tetrahydrodipicolinate from L-aspartate: step 4/4. In terms of biological role, catalyzes the conversion of 4-hydroxy-tetrahydrodipicolinate (HTPA) to tetrahydrodipicolinate. The protein is 4-hydroxy-tetrahydrodipicolinate reductase of Geobacter sulfurreducens (strain ATCC 51573 / DSM 12127 / PCA).